Here is a 352-residue protein sequence, read N- to C-terminus: DNA polymerase IV (352 aa).

The 182-residue stretch at 6 to 187 folds into the UmuC domain; that stretch reads IIHIDCDCFY…LPVSKLHGVG (182 aa). Mg(2+) is bound by residues Asp10 and Asp105. Residue Glu106 is part of the active site.

It belongs to the DNA polymerase type-Y family. Monomer. Requires Mg(2+) as cofactor.

Its subcellular location is the cytoplasm. The catalysed reaction is DNA(n) + a 2'-deoxyribonucleoside 5'-triphosphate = DNA(n+1) + diphosphate. Poorly processive, error-prone DNA polymerase involved in untargeted mutagenesis. Copies undamaged DNA at stalled replication forks, which arise in vivo from mismatched or misaligned primer ends. These misaligned primers can be extended by PolIV. Exhibits no 3'-5' exonuclease (proofreading) activity. May be involved in translesional synthesis, in conjunction with the beta clamp from PolIII. The sequence is that of DNA polymerase IV from Ectopseudomonas mendocina (strain ymp) (Pseudomonas mendocina).